We begin with the raw amino-acid sequence, 543 residues long: Pectate disaccharide-lyase (543 aa).

This sequence belongs to the polysaccharide lyase 2 family. It depends on Cu cation as a cofactor. Mn(2+) serves as cofactor. The cofactor is Ni(2+).

The protein resides in the cytoplasm. The enzyme catalyses [(1-&gt;4)-alpha-D-galacturonosyl](n) = 4-(4-deoxy-alpha-D-galact-4-enuronosyl)-D-galacturonate + [(1-&gt;4)-alpha-D-galacturonosyl](n-2). It functions in the pathway glycan metabolism; pectin degradation. Its function is as follows. Catalyzes the formation of unsaturated digalacturonates from polygalacturonate or short oligogalacturonates. The polypeptide is Pectate disaccharide-lyase (pelW) (Dickeya dadantii (strain 3937) (Erwinia chrysanthemi (strain 3937))).